The following is a 1483-amino-acid chain: ABC multidrug transporter atrA (1483 aa).

The span at 1-19 (MASHKKSEDPLVVKDRQEQ) shows a compositional bias: basic and acidic residues. The tract at residues 1–92 (MASHKKSEDP…NDPAVDPQGP (92 aa)) is disordered. A glycan (N-linked (GlcNAc...) asparagine) is linked at Asn32. The span at 71 to 82 (PTRTSTLATISE) shows a compositional bias: polar residues. Residues Asn123 and Asn322 are each glycosylated (N-linked (GlcNAc...) asparagine). The ABC transporter 1 domain maps to 147 to 398 (FRIGEMMKNR…FERQGWECPQ (252 aa)). 5 consecutive transmembrane segments (helical) span residues 512 to 532 (TVST…VFYG), 539 to 559 (GFTA…LIAM), 595 to 615 (IPVK…LAGL), 620 to 640 (GQFF…SAVF), and 654 to 674 (MGLA…VLPV). Asn718 carries N-linked (GlcNAc...) asparagine glycosylation. Residues 759–779 (FGILIAFLVGFMMIYFIATEL) form a helical membrane-spanning segment. N-linked (GlcNAc...) asparagine glycosylation is present at Asn780. The 244-residue stretch at 840–1083 (FTWRDVCYDI…LLNYFESNGA (244 aa)) folds into the ABC transporter 2 domain. Residue 876–883 (GVSGAGKT) participates in ATP binding. N-linked (GlcNAc...) asparagine glycans are attached at residues Asn947 and Asn1146. 5 helical membrane passes run 1179-1199 (YIAS…FSFF), 1215-1235 (LFML…LFVT), 1254-1274 (AFLI…GILT), 1293-1313 (LVLL…HMAI), and 1320-1340 (ETAS…CGVM). Asn1413 carries an N-linked (GlcNAc...) asparagine glycan. A helical membrane pass occupies residues 1444–1464 (FGLMWVYIVFNIFLATMLYYT). Asn1471 carries an N-linked (GlcNAc...) asparagine glycan.

Belongs to the ABC transporter superfamily. ABCG family. PDR (TC 3.A.1.205) subfamily.

Its subcellular location is the cell membrane. The enzyme catalyses (R)-miconazole(in) + ATP + H2O = (R)-miconazole(out) + ADP + phosphate + H(+). In terms of biological role, pleiotropic ABC efflux transporter involved in the basal level of azole susceptibility. Confers resistance to miconazole and clotrimazole. The polypeptide is ABC multidrug transporter atrA (Aspergillus oryzae (strain ATCC 42149 / RIB 40) (Yellow koji mold)).